We begin with the raw amino-acid sequence, 90 residues long: UPF0512 protein L (90 aa).

The protein belongs to the UPF0512 family.

This Dictyostelium discoideum (Social amoeba) protein is UPF0512 protein L.